The primary structure comprises 157 residues: Transcriptional repressor NrdR (157 aa).

Residues 3–34 (CPFCNAEDTKVIDSRLVEEGTQVRRRRECLKC) fold into a zinc finger. The ATP-cone domain occupies 49 to 139 (PRIIKRDGRR…VYRSFQDINA (91 aa)).

Belongs to the NrdR family. Zn(2+) serves as cofactor.

Functionally, negatively regulates transcription of bacterial ribonucleotide reductase nrd genes and operons by binding to NrdR-boxes. The polypeptide is Transcriptional repressor NrdR (Coxiella burnetii (strain CbuK_Q154) (Coxiella burnetii (strain Q154))).